The sequence spans 105 residues: Small ribosomal subunit protein bS18 (105 aa).

Residues 1–34 (MMINKEQDLNQLETNQEQSVEQNQTDEKRKPKPN) form a disordered region. The segment covering 9 to 23 (LNQLETNQEQSVEQN) has biased composition (polar residues).

This sequence belongs to the bacterial ribosomal protein bS18 family. Part of the 30S ribosomal subunit. Forms a tight heterodimer with protein bS6.

Its function is as follows. Binds as a heterodimer with protein bS6 to the central domain of the 16S rRNA, where it helps stabilize the platform of the 30S subunit. The chain is Small ribosomal subunit protein bS18 from Mycoplasma genitalium (strain ATCC 33530 / DSM 19775 / NCTC 10195 / G37) (Mycoplasmoides genitalium).